The sequence spans 65 residues: Large ribosomal subunit protein uL29 (65 aa).

The protein belongs to the universal ribosomal protein uL29 family.

This chain is Large ribosomal subunit protein uL29, found in Coxiella burnetii (strain CbuK_Q154) (Coxiella burnetii (strain Q154)).